We begin with the raw amino-acid sequence, 161 residues long: MSKIIQVGMADFKMATAPDKLITAGLGSCIGICLYDKVIKLGSLTHIMLPSSSQAKNASNEAKFADTGLKLAIREMEKNGAQASRLLAKIAGGAQMFKFSGESDIMKIGERNSVAVKENLQLHRIKLLSSDTGGNYGRTIIFDPETGDLLVKTIGHGERII.

It belongs to the CheD family.

The catalysed reaction is L-glutaminyl-[protein] + H2O = L-glutamyl-[protein] + NH4(+). In terms of biological role, probably deamidates glutamine residues to glutamate on methyl-accepting chemotaxis receptors (MCPs), playing an important role in chemotaxis. In Syntrophomonas wolfei subsp. wolfei (strain DSM 2245B / Goettingen), this protein is Probable chemoreceptor glutamine deamidase CheD.